Here is a 65-residue protein sequence, read N- to C-terminus: Small ribosomal subunit protein bS21 (65 aa).

Belongs to the bacterial ribosomal protein bS21 family.

This is Small ribosomal subunit protein bS21 from Geobacter sp. (strain M21).